A 231-amino-acid chain; its full sequence is Large ribosomal subunit protein uL1 (231 aa).

Belongs to the universal ribosomal protein uL1 family. In terms of assembly, part of the 50S ribosomal subunit.

Functionally, binds directly to 23S rRNA. The L1 stalk is quite mobile in the ribosome, and is involved in E site tRNA release. In terms of biological role, protein L1 is also a translational repressor protein, it controls the translation of the L11 operon by binding to its mRNA. This Herminiimonas arsenicoxydans protein is Large ribosomal subunit protein uL1.